Consider the following 166-residue polypeptide: 16S rRNA aminocarboxypropyltransferase (166 aa).

The S-adenosyl-L-methionine site is built by threonine 17, isoleucine 62, leucine 84, tyrosine 99, and serine 103.

This sequence belongs to the TDD superfamily. TSR3 family.

Its subcellular location is the cytoplasm. The enzyme catalyses an N(1)-methylpseudouridine in rRNA + S-adenosyl-L-methionine = N(1)-methyl-N(3)-[(3S)-3-amino-3-carboxypropyl]pseudouridine in rRNA + S-methyl-5'-thioadenosine + H(+). In terms of biological role, aminocarboxypropyltransferase that catalyzes the aminocarboxypropyl transfer on pseudouridine corresponding to position 914 in M.jannaschii 16S rRNA. It constitutes the last step in biosynthesis of the hypermodified N1-methyl-N3-(3-amino-3-carboxypropyl) pseudouridine (m1acp3-Psi). The sequence is that of 16S rRNA aminocarboxypropyltransferase from Saccharolobus islandicus (strain Y.N.15.51 / Yellowstone #2) (Sulfolobus islandicus).